A 460-amino-acid chain; its full sequence is MAWNTNLRWRLPLTCLLLQVIMVILFGVFVRYDPDADAHWIDERLGRNISSDMDNEFYYRYPSFQDVHVMIFVGFGFLMTFLQRYGFSSVGFNFLLAAFGIQWALLMQGWLHSFHSGYIVLGVENLINADFCVGSVCVAFGAVLGKVSPVQLLIMTLFQVTLFSVNEFILLNLLEVKDAGGSMTIHTFGAYFGLTVTWILYRPNLYQSKERQSSVYHSDLFAMIGTLFLWMYWPSFNSAVSHHGDAQHRAAINTYCSLAACVLTSVALSSALHKKGKLDMVHIQNATLAGGVAVGTAAEMMLMPYGSLIVGFICGIISTLGFVYLTPFLESRLRIQDTCGIHNLHGMPGIIGGIVGAVTAASANTQQYGQKGLAHAFDIDATKTTWTASMQGSFQAAGLFVSLAMALVGGLIVGVILKLPFWGQPADENCFEDAIYWEIPEDQKSLVSRSEDPTLRPTEP.

Residues M1–W9 are Cytoplasmic-facing. The chain crosses the membrane as a helical span at residues R10–V30. At R31–Y61 the chain is on the extracellular side. N-linked (GlcNAc...) asparagine glycosylation occurs at N48. A helical membrane pass occupies residues P62–L82. Residues Q83 to G86 are Cytoplasmic-facing. The chain crosses the membrane as a helical span at residues F87 to M107. Residues Q108 to N125 are Extracellular-facing. The chain crosses the membrane as a helical span at residues L126–G145. At K146–Q151 the chain is on the cytoplasmic side. A helical transmembrane segment spans residues L152–L174. Residues E175–A179 are Extracellular-facing. Residues G180–L200 form a helical membrane-spanning segment. At Y201–D219 the chain is on the cytoplasmic side. A helical membrane pass occupies residues L220–V240. The Extracellular segment spans residues S241–A251. The helical transmembrane segment at I252–L272 threads the bilayer. Residues H273–N285 lie on the Cytoplasmic side of the membrane. Residues A286–G306 traverse the membrane as a helical segment. S307 is a topological domain (extracellular). Residues L308 to F328 form a helical membrane-spanning segment. Residues L329–G340 are Cytoplasmic-facing. A helical membrane pass occupies residues I341–A361. Residues S362 to A396 are Extracellular-facing. A helical membrane pass occupies residues A397 to L417. Topologically, residues K418 to P460 are cytoplasmic.

This sequence belongs to the ammonium transporter (TC 2.A.49) family. Rh subfamily. Homotrimer. N-glycosylated.

The protein localises to the cell membrane. It localises to the apical cell membrane. It carries out the reaction NH4(+)(in) = NH4(+)(out). The catalysed reaction is methylamine(out) = methylamine(in). It catalyses the reaction CO2(out) = CO2(in). Its function is as follows. Ammonium transporter involved in the maintenance of acid-base homeostasis. Transports ammonium and its related derivative methylammonium across the plasma membrane of epithelial cells likely contributing to renal transepithelial ammonia transport and ammonia metabolism. Postulated to primarily mediate an electroneutral bidirectional transport of NH3 ammonia species according to a mechanism that implies interaction of an NH4(+) ion with acidic residues of the pore entry followed by dissociation of NH4(+) into NH3 and H(+). As a result NH3 transits through the central pore and is protonated on the extracellular side reforming NH4(+). May act as a CO2 channel providing for renal acid secretion. This Sus scrofa (Pig) protein is Ammonium transporter Rh type C (RHCG).